A 187-amino-acid chain; its full sequence is Accessory gene regulator protein B (187 aa).

A run of 5 helical transmembrane segments spans residues 49–69, 82–102, 107–127, 143–163, and 164–184; these read IAYI…FYLI, FWCY…VLHF, TLMM…APAA, YFSI…KEPY, and TQFI…IYYS.

It belongs to the AgrB family.

It is found in the cell membrane. In terms of biological role, essential for the production of a quorum sensing system signal molecule, the autoinducing peptide (AIP). This quorum sensing system is responsible for the regulation of the expression of virulence factor genes. Involved in the proteolytic processing of AgrD, the precursor of AIP. The sequence is that of Accessory gene regulator protein B from Staphylococcus aureus (strain MW2).